The chain runs to 158 residues: Endoribonuclease YbeY (158 aa).

Positions 114, 118, and 124 each coordinate Zn(2+).

This sequence belongs to the endoribonuclease YbeY family. Requires Zn(2+) as cofactor.

It localises to the cytoplasm. In terms of biological role, single strand-specific metallo-endoribonuclease involved in late-stage 70S ribosome quality control and in maturation of the 3' terminus of the 16S rRNA. This chain is Endoribonuclease YbeY, found in Pasteurella multocida (strain Pm70).